The chain runs to 744 residues: Scytalone dehydratase-like protein Arp1 (744 aa).

A substrate-binding site is contributed by Tyr-621. Active-site residues include His-656 and His-681. Residue Asn-702 participates in substrate binding.

Belongs to the scytalone dehydratase family. In terms of assembly, homotrimer. Each subunit contains an active site, located in the central part of the hydrophobic core of the monomer, which functions independently.

Its function is as follows. Scytalone dehydratase-like protein; part of the Pks2 gene cluster that mediates the formation of infectious structures (appressoria), enabling these fungi to kill insects faster. The product of the Pks2 gene cluster is different from the one of Pks1 and has still not been identified. The protein is Scytalone dehydratase-like protein Arp1 of Metarhizium brunneum (strain ARSEF 3297).